The sequence spans 309 residues: Tagatose-6-phosphate kinase (309 aa).

Belongs to the carbohydrate kinase PfkB family. LacC subfamily.

It catalyses the reaction D-tagatofuranose 6-phosphate + ATP = D-tagatofuranose 1,6-bisphosphate + ADP + H(+). It functions in the pathway carbohydrate metabolism; D-tagatose 6-phosphate degradation; D-glyceraldehyde 3-phosphate and glycerone phosphate from D-tagatose 6-phosphate: step 1/2. This is Tagatose-6-phosphate kinase from Streptococcus pneumoniae (strain ATCC 700669 / Spain 23F-1).